Reading from the N-terminus, the 1602-residue chain is Calmodulin-regulated spectrin-associated protein 1 (1602 aa).

The 116-residue stretch at 216 to 331 (ESPAHQKVRY…FIAELFWWFE (116 aa)) folds into the Calponin-homology (CH) domain. 5 positions are modified to phosphoserine: serine 217, serine 371, serine 375, serine 416, and serine 431. Positions 426–471 (QKQQKSIQGEDIPDQRHRSNSLTRVDGQPRGAAIAWPEKKTRPASQ) are disordered. Position 512 is a phosphothreonine (threonine 512). Phosphoserine is present on residues serine 563, serine 575, and serine 589. Over residues 603–620 (AKEKQVITKEDERGEGRP) the composition is skewed to basic and acidic residues. Residues 603–637 (AKEKQVITKEDERGEGRPRSIVSRRPSEGPQPLVR) are disordered. Residues serine 629, serine 722, serine 728, serine 738, and serine 740 each carry the phosphoserine modification. A compositionally biased stretch (basic and acidic residues) spans 772–789 (KLQEDMKVKEHEDKDDAS). Disordered stretches follow at residues 772 to 808 (KLQE…VSMA) and 825 to 870 (LNSC…GKDP). Composition is skewed to low complexity over residues 797–808 (STASQMSSVSMA) and 830–841 (TKSSTSSSQKTT). Residues 857-869 (QKREQSPSQHGKD) show a composition bias toward basic and acidic residues. Residues 871–892 (ASLLASELVQLHMQLEEKRRAI) are sufficient for interaction with SPTBN1. Coiled coils occupy residues 873-909 (LLAS…QRLK) and 1016-1048 (DVNE…QEQL). The interval 903-922 (SARQRLKLGKAAFLHVVKKG) is sufficient for interaction with calmodulin. Disordered stretches follow at residues 1075–1165 (FVEP…GKCL), 1206–1226 (KEVG…VEEP), and 1301–1448 (ARVR…DWET). Serine 1080 is subject to Phosphoserine. The span at 1103–1114 (RPAELKVPKDRP) shows a compositional bias: basic and acidic residues. Positions 1115–1127 (QGSSRSKTPTPSV) are enriched in polar residues. A compositionally biased stretch (low complexity) spans 1206 to 1220 (KEVGSSSSDVSGKES). Residues 1291–1343 (LLKQQRKAEEARVRKQQLEAEVELKRDEARRKAEEDRVRKEEEKARRELIKQE) adopt a coiled-coil conformation. The segment covering 1301–1346 (ARVRKQQLEAEVELKRDEARRKAEEDRVRKEEEKARRELIKQEYLR) has biased composition (basic and acidic residues). The segment covering 1361-1372 (PKSKPKKPRPKS) has biased composition (basic residues). Positions 1380–1392 (SDSGTKCSSTPDN) are enriched in polar residues. Low complexity predominate over residues 1393-1410 (LSRTQSGSSLSLASAATT). Serine 1398 and serine 1427 each carry phosphoserine. Residues 1463–1597 (GPKLFKEPSS…QPKRPAVPKK (135 aa)) enclose the CKK domain. At tyrosine 1537 the chain carries Phosphotyrosine.

Belongs to the CAMSAP1 family. Interacts with spectrin via SPTBN1; the interaction is direct. Interacts with calmodulin; calcium-dependent it prevents interaction with spectrin.

Its subcellular location is the cytoplasm. The protein resides in the cytoskeleton. In terms of biological role, key microtubule-organizing protein that specifically binds the minus-end of non-centrosomal microtubules and regulates their dynamics and organization. Specifically recognizes growing microtubule minus-ends and stabilizes microtubules. Acts on free microtubule minus-ends that are not capped by microtubule-nucleating proteins or other factors and protects microtubule minus-ends from depolymerization. In contrast to CAMSAP2 and CAMSAP3, tracks along the growing tips of minus-end microtubules without significantly affecting the polymerization rate: binds at the very tip of the microtubules minus-end and acts as a minus-end tracking protein (-TIP) that dissociates from microtubules after allowing tubulin incorporation. Through interaction with spectrin may regulate neurite outgrowth. This chain is Calmodulin-regulated spectrin-associated protein 1 (CAMSAP1), found in Homo sapiens (Human).